We begin with the raw amino-acid sequence, 839 residues long: Genome polyprotein (839 aa).

Residues 55–66 show a composition bias toward polar residues; that stretch reads TAEVGSHQSEPL. Residues 55-76 form a disordered region; the sequence is TAEVGSHQSEPLKTSVDKPGSK. 2 consecutive short sequence motifs ((L)YPX(n)L motif) follow at residues 167-171 and 200-205; these read YPHGL and YPVWEL. The span at 496–510 shows a compositional bias: polar residues; that stretch reads SGGFSTTVSTEQNVP. Disordered regions lie at residues 496–530 and 773–792; these read SGGF…NKGK and GDLE…RFES. The involved in P1-2A pentamerization stretch occupies residues 766-836; it reads MLDRIAGGDL…RKLKGLFSQS (71 aa). The segment covering 780–792 has biased composition (basic and acidic residues); sequence DDPRTDEDRRFES.

It belongs to the picornaviridae polyprotein family. Homodimer. Homomultimer; probably interacts with membranes in a multimeric form. Seems to assemble into amyloid-like fibers. As to quaternary structure, homopentamer. Homooligomer. In terms of assembly, interacts with capsid protein VP2. Interacts with capsid protein VP3. Interacts with capsid protein VP1. Interacts with capsid protein VP3. As to quaternary structure, interacts with capsid protein VP1. Interacts with capsid protein VP2. In terms of processing, specific enzymatic cleavages by viral protease in vivo yield a variety of precursors and mature proteins. Polyprotein processing intermediates are produced, such as P1-2A which is a functional precursor of the structural proteins, VP0 which is a VP4-VP2 precursor, VP1-2A precursor, 3ABC precursor which is a stable and catalytically active precursor of 3A, 3B and 3C proteins, 3AB and 3CD precursors. The assembly signal 2A is removed from VP1-2A by a host protease, possibly host Cathepsin L. This cleavage occurs over a region of 3 amino-acids probably generating VP1 proteins with heterogeneous C-termini. During virion maturation, immature virions are rendered infectious following cleavage of VP0 into VP4 and VP2. This maturation seems to be an autocatalytic event triggered by the presence of RNA in the capsid and is followed by a conformational change of the particle. Post-translationally, the assembly signal 2A is removed from VP1-2A by a host protease, possibly host Cathepsin L in naked virions. This cleavage does not occur in enveloped virions. This cleavage occurs over a region of 3 amino-acids probably generating VP1 proteins with heterogeneous C-termini. In terms of processing, unlike other picornaviruses, does not seem to be myristoylated.

Its subcellular location is the virion. It localises to the host endosome. It is found in the host multivesicular body. The protein resides in the host membrane. Capsid proteins VP1, VP2, and VP3 form a closed capsid enclosing the viral positive strand RNA genome. All these proteins contain a beta-sheet structure called beta-barrel jelly roll. Together they form an icosahedral capsid (T=3) composed of 60 copies of each VP1, VP2, and VP3, with a diameter of approximately 300 Angstroms. VP1 is situated at the 12 fivefold axes, whereas VP2 and VP3 are located at the quasi-sixfold axes. The naked capsid interacts with the host receptor HAVCR1 to provide virion attachment to and probably entry into the target cell. Its function is as follows. VP0 precursor is a component of the immature procapsids. Functionally, plays a role in the assembly of the 12 pentamers into an icosahedral structure. Has not been detected in mature virions, supposedly owing to its small size. In terms of biological role, precursor component of immature procapsids that corresponds to an extended form of the structural protein VP1. After maturation, possibly by the host Cathepsin L, the assembly signal 2A is cleaved to give rise to the mature VP1 protein. Affects membrane integrity and causes an increase in membrane permeability. Its function is as follows. Functions as a viroporin. Affects membrane integrity and causes an increase in membrane permeability. Involved in host intracellular membrane rearrangements probably to give rise to the viral factories. Does not disrupt calcium homeostasis or glycoprotein trafficking. Antagonizes the innate immune response of the host by suppressing IFN-beta synthesis, which it achieves by interfering with the RIG-I/IFIH1 pathway. This Callithrix (Owl-faced monkey) protein is Genome polyprotein.